The sequence spans 70 residues: Cytochrome c oxidase subunit 8B, mitochondrial (70 aa).

The N-terminal 24 residues, 1 to 24 (MLSLRPALRLLQAPLRCWAVPKAH), are a transit peptide targeting the mitochondrion. Residues 25 to 35 (VSAKPAETPTS) lie on the Mitochondrial matrix side of the membrane. The chain crosses the membrane as a helical span at residues 36-59 (PAEQAVGLSFIFITFLGPAGWILS). At 60–70 (HVENYKKRPRA) the chain is on the mitochondrial intermembrane side.

This sequence belongs to the cytochrome c oxidase VIII family. In terms of assembly, component of the cytochrome c oxidase (complex IV, CIV), a multisubunit enzyme composed of 14 subunits. The complex is composed of a catalytic core of 3 subunits MT-CO1, MT-CO2 and MT-CO3, encoded in the mitochondrial DNA, and 11 supernumerary subunits COX4I, COX5A, COX5B, COX6A, COX6B, COX6C, COX7A, COX7B, COX7C, COX8 and NDUFA4, which are encoded in the nuclear genome. The complex exists as a monomer or a dimer and forms supercomplexes (SCs) in the inner mitochondrial membrane with NADH-ubiquinone oxidoreductase (complex I, CI) and ubiquinol-cytochrome c oxidoreductase (cytochrome b-c1 complex, complex III, CIII), resulting in different assemblies (supercomplex SCI(1)III(2)IV(1) and megacomplex MCI(2)III(2)IV(2)).

It localises to the mitochondrion inner membrane. Its pathway is energy metabolism; oxidative phosphorylation. Its function is as follows. Component of the cytochrome c oxidase, the last enzyme in the mitochondrial electron transport chain which drives oxidative phosphorylation. The respiratory chain contains 3 multisubunit complexes succinate dehydrogenase (complex II, CII), ubiquinol-cytochrome c oxidoreductase (cytochrome b-c1 complex, complex III, CIII) and cytochrome c oxidase (complex IV, CIV), that cooperate to transfer electrons derived from NADH and succinate to molecular oxygen, creating an electrochemical gradient over the inner membrane that drives transmembrane transport and the ATP synthase. Cytochrome c oxidase is the component of the respiratory chain that catalyzes the reduction of oxygen to water. Electrons originating from reduced cytochrome c in the intermembrane space (IMS) are transferred via the dinuclear copper A center (CU(A)) of subunit 2 and heme A of subunit 1 to the active site in subunit 1, a binuclear center (BNC) formed by heme A3 and copper B (CU(B)). The BNC reduces molecular oxygen to 2 water molecules using 4 electrons from cytochrome c in the IMS and 4 protons from the mitochondrial matrix. The chain is Cytochrome c oxidase subunit 8B, mitochondrial (COX8B) from Ateles belzebuth (White-bellied spider monkey).